The chain runs to 318 residues: Acetaldehyde dehydrogenase 2 (318 aa).

Residue 9-12 coordinates NAD(+); it reads SGNI. The active-site Acyl-thioester intermediate is the Cys129. Residues 160–168 and Asn288 each bind NAD(+); that span reads SAGPGTRAN.

It belongs to the acetaldehyde dehydrogenase family.

It catalyses the reaction acetaldehyde + NAD(+) + CoA = acetyl-CoA + NADH + H(+). This is Acetaldehyde dehydrogenase 2 from Mycolicibacterium vanbaalenii (strain DSM 7251 / JCM 13017 / BCRC 16820 / KCTC 9966 / NRRL B-24157 / PYR-1) (Mycobacterium vanbaalenii).